Reading from the N-terminus, the 231-residue chain is Verlamelin biosynthesis protein B (231 aa).

Its pathway is secondary metabolite biosynthesis. In terms of biological role, part of the gene cluster that mediates the biosynthesis of verlamelin, a lipopeptide that exhibits antifungal activity against plant pathogenic fungi. Verlamelin is a cyclic hexadepsipeptide and is bridged by ester bonding between a 5-hydroxytetradecanoic acid moiety and a carboxyl group on the terminal Val of amide-bonded tetradecanoyl-hexapeptide D-allo-Thr-D-Ala-L-Pro-L-Gln-D-Tyr-L-Val. VlmA and vlmB are altogether regarded as essential components in the biosynthesis of 5-hydroxytetradecanoic acid. VlmA catalyzes the hydroxylation at position C5 of tetradecanoic acid produced in primary metabolism, while the precise function of vlmB still remains to be solved. To be loaded onto the waiting NRPS, 5-hydroxytetradecanoic acid is activated in the form of acyladenylate by the AMP-dependent ligase vlmC. VlmS seems to accept the fatty-acyl intermediate onto the initial module to further elongate amino acid residues by the downstream modules. In addition, in the last module at its C-terminus, vlmS contains a surplus condensation (C) domain that may be involved in cyclization, the last step to form verlamelin. This chain is Verlamelin biosynthesis protein B, found in Lecanicillium sp.